We begin with the raw amino-acid sequence, 157 residues long: Protein Smg homolog (157 aa).

This sequence belongs to the Smg family.

This Shewanella woodyi (strain ATCC 51908 / MS32) protein is Protein Smg homolog.